The primary structure comprises 112 residues: Large ribosomal subunit protein P1 (112 aa).

The interval 80 to 112 is disordered; sequence AAAAPAAESKKEEKKKEEESDQSDDDMGFGLFD. Over residues 87–97 the composition is skewed to basic and acidic residues; that stretch reads ESKKEEKKKEE. Residues serine 99 and serine 102 each carry the phosphoserine modification.

Belongs to the eukaryotic ribosomal protein P1/P2 family. As to quaternary structure, P1 and P2 exist as dimers at the large ribosomal subunit.

Functionally, plays an important role in the elongation step of protein synthesis. The protein is Large ribosomal subunit protein P1 (RpLP1) of Drosophila melanogaster (Fruit fly).